We begin with the raw amino-acid sequence, 132 residues long: Tyrosine phosphatase-like protein N2 (132 aa).

The 132-residue stretch at 1-132 (MQGPMKNTVA…DILGRFQRVF (132 aa)) folds into the Tyrosine-protein phosphatase domain.

It belongs to the protein-tyrosine phosphatase family.

This chain is Tyrosine phosphatase-like protein N2 (N4), found in Microplitis demolitor (Parasitoid wasp).